Here is a 303-residue protein sequence, read N- to C-terminus: Glycine--tRNA ligase alpha subunit (303 aa).

The protein belongs to the class-II aminoacyl-tRNA synthetase family. In terms of assembly, tetramer of two alpha and two beta subunits.

It is found in the cytoplasm. The catalysed reaction is tRNA(Gly) + glycine + ATP = glycyl-tRNA(Gly) + AMP + diphosphate. This Klebsiella pneumoniae (strain 342) protein is Glycine--tRNA ligase alpha subunit.